Reading from the N-terminus, the 842-residue chain is ATP-binding cassette sub-family B member 6 (842 aa).

Topologically, residues 1-26 (MVTVGNYCEAEGPVGPAWMQDGLSPC) are lumenal. Residues 1-205 (MVTVGNYCEA…SGGLFVLGLW (205 aa)) form a required for the lysosomal targeting region. The required for ATPase activity stretch occupies residues 1–236 (MVTVGNYCEA…RSQVRSAAQQ (236 aa)). The N-linked (GlcNAc...) asparagine glycan is linked to Asn-6. A disulfide bond links Cys-8 and Cys-26. A helical transmembrane segment spans residues 27 to 47 (FFFTLVPSTRMALGTLALVLA). Over 48–72 (LPCRRRERPAGADSLSWGAGPRISP) the chain is Cytoplasmic. A helical transmembrane segment spans residues 73–93 (YVLQLLLATLQAALPLAGLAG). The Lumenal segment spans residues 94 to 106 (RVGTARGAPLPSY). Residues 107-127 (LLLASVLESLAGACGLWLLVV) traverse the membrane as a helical segment. Residues 128 to 147 (ERSQARQRLAMGIWIKFRHS) are Cytoplasmic-facing. Residues 148 to 168 (PGLLLLWTVAFAAENLALVSW) form a helical membrane-spanning segment. Over 169-185 (NSPQWWWARADLGQQVQ) the chain is Lumenal. The helical transmembrane segment at 186–206 (FSLWVLRYVVSGGLFVLGLWA) threads the bilayer. The Cytoplasmic segment spans residues 207-263 (PGLRPQSYTLQVHEEDQDVERSQVRSAAQQSTWRDFGRKLRLLSGYLWPRGSPALQL). A helical transmembrane segment spans residues 264-284 (VVLICLGLMGLERALNVLVPI). One can recognise an ABC transmembrane type-1 domain in the interval 265–556 (VLICLGLMGL…FGTYYRMIQT (292 aa)). Over 285–291 (FYRNIVN) the chain is Lumenal. The helical transmembrane segment at 292-312 (LLTEKAPWNSLAWTVTSYVFL) threads the bilayer. Over 313 to 375 (KFLQGGGTGS…TGEVLRIADR (63 aa)) the chain is Cytoplasmic. A helical transmembrane segment spans residues 376-396 (GTSSVTGLLSYLVFNVIPTLA). A topological domain (lumenal) is located at residue Asp-397. Residues 398–418 (IIIGIIYFSMFFNAWFGLIVF) traverse the membrane as a helical segment. The Cytoplasmic segment spans residues 419 to 499 (LCMSLYLTLT…SSASLVLLNQ (81 aa)). A helical transmembrane segment spans residues 500 to 520 (TQNLVIGLGLLAGSLLCAYFV). Topologically, residues 521–529 (TEQKLQVGD) are lumenal. The chain crosses the membrane as a helical span at residues 530–550 (YVLFGTYIIQLYMPLNWFGTY). Over 551–842 (YRMIQTNFID…EDTKPQTMER (292 aa)) the chain is Cytoplasmic. Residues 590-824 (IEFENVHFSY…GGVYADMWQL (235 aa)) enclose the ABC transporter domain. ATP contacts are provided by residues Tyr-599 and 623–634 (GPSGAGKSTILR).

It belongs to the ABC transporter superfamily. ABCB family. Heavy Metal importer (TC 3.A.1.210) subfamily. In terms of assembly, homodimer. In terms of processing, N-glycosylated. Widely expressed. High expression is detected in the retinal epithelium. Expressed in mature erythrocytes.

It is found in the cell membrane. It localises to the mitochondrion outer membrane. Its subcellular location is the endoplasmic reticulum membrane. The protein resides in the golgi apparatus membrane. The protein localises to the endosome membrane. It is found in the lysosome membrane. It localises to the late endosome membrane. Its subcellular location is the early endosome membrane. The protein resides in the secreted. The protein localises to the extracellular exosome. It is found in the mitochondrion. It localises to the endosome. Its subcellular location is the multivesicular body membrane. The protein resides in the melanosome membrane. It carries out the reaction heme b(in) + ATP + H2O = heme b(out) + ADP + phosphate + H(+). The catalysed reaction is coproporphyrin III(in) + ATP + H2O = coproporphyrin III(out) + ADP + phosphate + H(+). It catalyses the reaction pheophorbide a(in) + ATP + H2O = pheophorbide a(out) + ADP + phosphate + H(+). The enzyme catalyses coproporphyrinogen III(in) + ATP + H2O = coproporphyrinogen III(out) + ADP + phosphate + H(+). It carries out the reaction protoporphyrin IX(in) + ATP + H2O = protoporphyrin IX(out) + ADP + phosphate + H(+). The catalysed reaction is coproporphyrin I(in) + ATP + H2O = coproporphyrin I(out) + ADP + phosphate + H(+). It catalyses the reaction uroporphyrin I(in) + ATP + H2O = uroporphyrin I(out) + ADP + phosphate + H(+). The enzyme catalyses uroporphyrin III(in) + ATP + H2O = uroporphyrin III(out) + ADP + phosphate + H(+). With respect to regulation, ATPase activity is inhibited by MgATP with an IC(50) of 1.03 mM and up-regulated by coporphyrin III&gt; hemin &gt; protoporphyrin IX. ATPase activity for hemin is up-regulated by glutathione. The ATPase activity is impaired by increasing copper concentrations (0-300 uM). The ATPase activity is stimulated in presence of glutathione for increasing copper concentrations (0-300 uM). In terms of biological role, ATP-dependent transporter that catalyzes the transport of a broad-spectrum of porphyrins from the cytoplasm to the extracellular space through the plasma membrane or into the vesicle lumen. May also function as an ATP-dependent importer of porphyrins from the cytoplasm into the mitochondria, in turn may participate in the de novo heme biosynthesis regulation and in the coordination of heme and iron homeostasis during phenylhydrazine stress. May also play a key role in the early steps of melanogenesis producing PMEL amyloid fibrils. In vitro, it confers to cells a resistance to toxic metal such as arsenic and cadmium and against chemotherapeutics agent such as 5-fluorouracil, SN-38 and vincristin. In addition may play a role in the transition metal homeostasis. The chain is ATP-binding cassette sub-family B member 6 from Homo sapiens (Human).